A 455-amino-acid chain; its full sequence is UDP-N-acetylmuramoylalanine--D-glutamate ligase (455 aa).

119–125 contacts ATP; sequence GTNGKTT.

It belongs to the MurCDEF family.

The protein localises to the cytoplasm. It catalyses the reaction UDP-N-acetyl-alpha-D-muramoyl-L-alanine + D-glutamate + ATP = UDP-N-acetyl-alpha-D-muramoyl-L-alanyl-D-glutamate + ADP + phosphate + H(+). It functions in the pathway cell wall biogenesis; peptidoglycan biosynthesis. Cell wall formation. Catalyzes the addition of glutamate to the nucleotide precursor UDP-N-acetylmuramoyl-L-alanine (UMA). This is UDP-N-acetylmuramoylalanine--D-glutamate ligase from Listeria innocua serovar 6a (strain ATCC BAA-680 / CLIP 11262).